Here is a 1064-residue protein sequence, read N- to C-terminus: Fibropellin-1 (1064 aa).

Positions 1 to 19 (MRTWLLAVLLLSVIAVTYG) are cleaved as a signal peptide. Positions 20-55 (QGECDSDPCENGSTCQEGEGSYICQCPMGYDGQNCD) constitute an EGF-like 1 domain. Disulfide bonds link C23–C34, C28–C43, C45–C54, and C62–C88. The N-linked (GlcNAc...) asparagine glycan is linked to N30. The CUB domain maps to 62–175 (CGYNVFDANG…NRGFRITFSS (114 aa)). The N-linked (GlcNAc...) asparagine glycan is linked to N136. Residues 176–212 (DGDDCDPNLCQNGAACTDLVNDYACTCPPGFTGRNCE) enclose the EGF-like 2; calcium-binding domain. 61 cysteine pairs are disulfide-bonded: C180–C191, C185–C200, C202–C211, C218–C229, C223–C238, C240–C249, C256–C267, C261–C276, C278–C287, C294–C305, C299–C314, C316–C325, C332–C343, C337–C352, C354–C363, C370–C381, C375–C390, C392–C401, C408–C419, C413–C428, C430–C439, C446–C457, C451–C466, C468–C477, C484–C495, C489–C504, C506–C515, C522–C533, C527–C542, C544–C553, C560–C571, C565–C580, C582–C591, C598–C609, C603–C618, C620–C629, C636–C647, C641–C656, C658–C667, C674–C685, C679–C694, C696–C705, C712–C723, C717–C732, C734–C743, C750–C761, C755–C770, C772–C781, C788–C799, C793–C808, C810–C819, C826–C837, C831–C846, C848–C857, C864–C875, C869–C884, C886–C895, C902–C913, C907–C922, C924–C933, and C939–C1015. One can recognise an EGF-like 3; calcium-binding domain in the interval 214–250 (DIDECASDPCQNGGACVDGVNGYVCNCVPGFDGDECE). Positions 252–288 (NINECASSPCLNGGICVDGVNMFECTCLAGFTGVRCE) constitute an EGF-like 4; calcium-binding domain. The region spanning 290–326 (NIDECASAPCQNGGICIDGINGYTCSCPLGFSGDNCE) is the EGF-like 5; calcium-binding domain. Residues 328–364 (NDDECSSIPCLNGGTCVDLVNAYMCVCAPGWTGPTCA) form the EGF-like 6; calcium-binding domain. In terms of domain architecture, EGF-like 7; calcium-binding spans 366-402 (NIDECASAPCQNGGVCIDGVNGYMCDCQPGYTGTHCE). One can recognise an EGF-like 8; calcium-binding domain in the interval 404 to 440 (DIDECARPPCQNGGDCVDGVNGYVCICAPGFDGLNCE). Residues 442-478 (NIDECASRPCQNGAVCVDGVNGFVCTCSAGYTGVLCE) enclose the EGF-like 9; calcium-binding domain. An EGF-like 10; calcium-binding domain is found at 480-516 (DINECASMPCLNGGVCTDLVNGYICTCAAGFEGTNCE). Residues 518-554 (DTDECASFPCQNGATCTDQVNGYVCTCVPGYTGVLCE) form the EGF-like 11; calcium-binding domain. The 37-residue stretch at 556-592 (DINECASFPCLNGGTCNDQVNGYVCVCAQDTSVSTCE) folds into the EGF-like 12; calcium-binding domain. The 37-residue stretch at 594 to 630 (DRDECASAPCLNGGACMDVVNGFVCTCLPGWEGTNCE) folds into the EGF-like 13; calcium-binding domain. The 37-residue stretch at 632–668 (NTDECASSPCMNGGLCVDQVNSYVCFCLPGFTGIHCG) folds into the EGF-like 14; calcium-binding domain. The 37-residue stretch at 670–706 (EIDECASSPCLNGGQCIDRVDSYECVCAAGYTAVRCQ) folds into the EGF-like 15; calcium-binding domain. The region spanning 708–744 (NIDECASAPCQNGGVCVDGVNGYVCNCAPGYTGDNCE) is the EGF-like 16; calcium-binding domain. The 37-residue stretch at 746–782 (EIDECASMPCLNGGACIEMVNGYTCQCVAGYTGVICE) folds into the EGF-like 17; calcium-binding domain. Positions 784–820 (DIDECASAPCQNGGVCTDTINGYICACVPGFTGSNCE) constitute an EGF-like 18; calcium-binding domain. The EGF-like 19; calcium-binding domain maps to 822-858 (NIDECASDPCLNGGICVDGVNGFVCQCPPNYSGTYCE). N-linked (GlcNAc...) asparagine glycosylation is present at N851. One can recognise an EGF-like 20 domain in the interval 860–896 (SLDACRSMPCQNGATCVNVGADYVCECVPGYAGQNCE). An EGF-like 21; calcium-binding domain is found at 898 to 934 (DINECASLPCQNGGLCIDGIAGYTCQCRLGYIGVNCE). The 120-residue stretch at 937–1056 (GFCDLEGMWY…GQDKWTRYEQ (120 aa)) folds into the Avidin-like domain.

In terms of assembly, homotetramer.

Its subcellular location is the secreted. The protein localises to the extracellular space. It localises to the cytoplasmic vesicle. It is found in the extracellular matrix. The protein resides in the hyaline layer. Its subcellular location is the apical lamina. Functionally, forms the apical lamina, a component of the extracellular matrix. This chain is Fibropellin-1 (EGF1), found in Strongylocentrotus purpuratus (Purple sea urchin).